A 297-amino-acid chain; its full sequence is Phosphatidylinositol N-acetylglucosaminyltransferase subunit C (297 aa).

The next 4 membrane-spanning stretches (helical) occupy residues 67-87 (VFVV…WLFG), 88-108 (TGLA…GGEG), 153-173 (AVFM…AAIV), and 239-259 (ALGG…LLLI).

This sequence belongs to the PIGC family. In terms of assembly, component of the glycosylphosphatidylinositol-N-acetylglucosaminyltransferase (GPI-GnT) complex composed at least by PIGA, PIGC, PIGH, PIGP, PIGQ, PIGY and DPM2. Interacts with PIGQ. Interacts with the heterodimer PIGA:PIGH.

The protein resides in the endoplasmic reticulum membrane. It functions in the pathway glycolipid biosynthesis; glycosylphosphatidylinositol-anchor biosynthesis. Functionally, part of the glycosylphosphatidylinositol-N-acetylglucosaminyltransferase (GPI-GnT) complex that catalyzes the transfer of N-acetylglucosamine from UDP-N-acetylglucosamine to phosphatidylinositol and participates in the first step of GPI biosynthesis. This Bos taurus (Bovine) protein is Phosphatidylinositol N-acetylglucosaminyltransferase subunit C.